Consider the following 987-residue polypeptide: Vacuolar membrane protease (987 aa).

Over 1-14 (MATRKARNPLAFMP) the chain is Cytoplasmic. Residues 15-35 (WPVTILTTAMYLALIIPLLVI) traverse the membrane as a helical segment. The Vacuolar segment spans residues 36–384 (HHNVPPAPRT…AFAVFRLHTL (349 aa)). N-linked (GlcNAc...) asparagine glycosylation is found at Asn51 and Asn117. The Zn(2+) site is built by His167 and Asp179. The active-site Proton acceptor is the Glu213. Glu214, Glu239, and His312 together coordinate Zn(2+). The chain crosses the membrane as a helical span at residues 385–405 (FALSVTLLIVAPLTLLVTSVI). The Cytoplasmic portion of the chain corresponds to 406-435 (LSRADKMYLFRSSVYSEINDDYIPLRGLRG). A helical transmembrane segment spans residues 436-456 (FFRFPFLISIPTGVTVGLAYM). At 457–466 (VTKVNPFIAH) the chain is on the vacuolar side. Residues 467–487 (SSSYAVWSMMISAWIFLAWFV) traverse the membrane as a helical segment. Residues 488–501 (SRVANSARPSAFHR) lie on the Cytoplasmic side of the membrane. The helical transmembrane segment at 502 to 522 (VYTWTWMFVLTWSLMVVCTVY) threads the bilayer. The Vacuolar segment spans residues 523-526 (EHEE). The chain crosses the membrane as a helical span at residues 527 to 547 (GLAGGYFIFFYFAGTFLATWI). The Cytoplasmic portion of the chain corresponds to 548-649 (SYLELFALPT…WSGVLPRWTW (102 aa)). Residues 572-600 (STQGSRLAASGDEHQDDAAEEDPTESTSL) are disordered. A helical membrane pass occupies residues 650 to 670 (LLQLLITAPVILMLIVPLALL). Residues 671–686 (TTSALSQTGQDGSPQL) lie on the Vacuolar side of the membrane. Residues 687–707 (LIYLFISCLTALLFAPMLPFI) form a helical membrane-spanning segment. The Cytoplasmic portion of the chain corresponds to 708–715 (HRYTYHLP). A helical transmembrane segment spans residues 716–736 (IFLLFVFIGTMIYNLVAFPFA). The Vacuolar portion of the chain corresponds to 737–987 (DSNRLKLFFL…KRSSLGALGS (251 aa)). Asn781 and Asn871 each carry an N-linked (GlcNAc...) asparagine glycan.

It belongs to the peptidase M28 family. Requires Zn(2+) as cofactor.

It is found in the vacuole membrane. Its function is as follows. May be involved in vacuolar sorting and osmoregulation. In Penicillium rubens (strain ATCC 28089 / DSM 1075 / NRRL 1951 / Wisconsin 54-1255) (Penicillium chrysogenum), this protein is Vacuolar membrane protease.